We begin with the raw amino-acid sequence, 247 residues long: tRNA pseudouridine synthase A (247 aa).

Catalysis depends on Asp-52, which acts as the Nucleophile. Tyr-113 serves as a coordination point for substrate.

Belongs to the tRNA pseudouridine synthase TruA family. Homodimer.

The enzyme catalyses uridine(38/39/40) in tRNA = pseudouridine(38/39/40) in tRNA. Its function is as follows. Formation of pseudouridine at positions 38, 39 and 40 in the anticodon stem and loop of transfer RNAs. The sequence is that of tRNA pseudouridine synthase A from Sinorhizobium fredii (strain NBRC 101917 / NGR234).